The primary structure comprises 205 residues: Small ribosomal subunit protein uS4 (205 aa).

The segment at 18-46 is disordered; sequence NIWGRPKSPVNSRAYGPGQHGQRRKSKVS. Residues 94-155 enclose the S4 RNA-binding domain; it reads SRLDAVVYRA…RSRNMALVLE (62 aa).

Belongs to the universal ribosomal protein uS4 family. In terms of assembly, part of the 30S ribosomal subunit. Contacts protein S5. The interaction surface between S4 and S5 is involved in control of translational fidelity.

In terms of biological role, one of the primary rRNA binding proteins, it binds directly to 16S rRNA where it nucleates assembly of the body of the 30S subunit. With S5 and S12 plays an important role in translational accuracy. The sequence is that of Small ribosomal subunit protein uS4 from Phenylobacterium zucineum (strain HLK1).